We begin with the raw amino-acid sequence, 197 residues long: Holliday junction branch migration complex subunit RuvA (197 aa).

The interval 1–64 (MIGHLEGRLR…EDAIQLYGFR (64 aa)) is domain I. Residues 65-143 (TVAEKDMFLR…VKKGREAEQP (79 aa)) are domain II. The interval 144 to 145 (AP) is flexible linker. The domain III stretch occupies residues 146–197 (AAESSYGDAYSALVNLGYRPAEAEKALGKAIKSLGADPPVEKLLKETLRLLA).

Belongs to the RuvA family. As to quaternary structure, homotetramer. Forms an RuvA(8)-RuvB(12)-Holliday junction (HJ) complex. HJ DNA is sandwiched between 2 RuvA tetramers; dsDNA enters through RuvA and exits via RuvB. An RuvB hexamer assembles on each DNA strand where it exits the tetramer. Each RuvB hexamer is contacted by two RuvA subunits (via domain III) on 2 adjacent RuvB subunits; this complex drives branch migration. In the full resolvosome a probable DNA-RuvA(4)-RuvB(12)-RuvC(2) complex forms which resolves the HJ.

It localises to the cytoplasm. Functionally, the RuvA-RuvB-RuvC complex processes Holliday junction (HJ) DNA during genetic recombination and DNA repair, while the RuvA-RuvB complex plays an important role in the rescue of blocked DNA replication forks via replication fork reversal (RFR). RuvA specifically binds to HJ cruciform DNA, conferring on it an open structure. The RuvB hexamer acts as an ATP-dependent pump, pulling dsDNA into and through the RuvAB complex. HJ branch migration allows RuvC to scan DNA until it finds its consensus sequence, where it cleaves and resolves the cruciform DNA. The polypeptide is Holliday junction branch migration complex subunit RuvA (Syntrophobacter fumaroxidans (strain DSM 10017 / MPOB)).